The sequence spans 386 residues: MKIHEYQGKDILRQFGVPVPRGIPAFTVQEAVEAAQKLGGPVWVVKAQIHAGGRGKGGGVKVAKSIDDVKALAGQILGMQLVTHQTGPEGQKVRRLYIEDGADIQKEYYLSCVTDRGTQKVAFIASSEGGMDIEEVAHSTPEKIITIFVDPLVGLTQAQGEELAKGIGMPADSTAQFIDICQKLYKCYMDTDASLVEINPLNRDSKGNVVALDAKFNFDANALFRLPEIVALRDLDEEDPAEVEASKFDLAYISLDGNIGCLVNGAGLAMATMDTIKLFGGEPANFLDVGGGATPEKVTEAFKIMLKNPKVEGILVNIFGGIMKCDTIATGVITACKAVNLQVPLVVRMKGTNEELGKKMLAESGLPIISADTMAEAATKIVEAVK.

The 236-residue stretch at 9-244 folds into the ATP-grasp domain; it reads KDILRQFGVP…LDEEDPAEVE (236 aa). Residues Lys-46, 53 to 55, Glu-99, Ala-102, and Glu-107 contribute to the ATP site; that span reads GRG. Residues Asn-199 and Asp-213 each contribute to the Mg(2+) site. Substrate is bound by residues Asn-264 and 321–323; that span reads GIM.

The protein belongs to the succinate/malate CoA ligase beta subunit family. Heterotetramer of two alpha and two beta subunits. Mg(2+) is required as a cofactor.

It carries out the reaction succinate + ATP + CoA = succinyl-CoA + ADP + phosphate. The catalysed reaction is GTP + succinate + CoA = succinyl-CoA + GDP + phosphate. It functions in the pathway carbohydrate metabolism; tricarboxylic acid cycle; succinate from succinyl-CoA (ligase route): step 1/1. Functionally, succinyl-CoA synthetase functions in the citric acid cycle (TCA), coupling the hydrolysis of succinyl-CoA to the synthesis of either ATP or GTP and thus represents the only step of substrate-level phosphorylation in the TCA. The beta subunit provides nucleotide specificity of the enzyme and binds the substrate succinate, while the binding sites for coenzyme A and phosphate are found in the alpha subunit. The protein is Succinate--CoA ligase [ADP-forming] subunit beta of Delftia acidovorans (strain DSM 14801 / SPH-1).